The chain runs to 309 residues: Elongation factor Ts (309 aa).

The interval 80-83 is involved in Mg(2+) ion dislocation from EF-Tu; sequence TDFV.

This sequence belongs to the EF-Ts family.

The protein localises to the cytoplasm. Functionally, associates with the EF-Tu.GDP complex and induces the exchange of GDP to GTP. It remains bound to the aminoacyl-tRNA.EF-Tu.GTP complex up to the GTP hydrolysis stage on the ribosome. This chain is Elongation factor Ts, found in Rhodospirillum rubrum (strain ATCC 11170 / ATH 1.1.1 / DSM 467 / LMG 4362 / NCIMB 8255 / S1).